The following is a 192-amino-acid chain: MDIQQNKTNKQKKKRNRFIFRSSILLILVAAVVFAIVSNMKDDNKIYRVGDAAPDFQLKQISEEVDQSTVQLSDLEGKGVMLNFWATWCDPCKAEMPYMQDLYAEYKEKGVEIVAVSLDGTELVVDQFIDEYDLTFPVPHDKNGEVKDLYKIGPMPTTYFIKPNGEIEEIVQGALTLDRLEGYLNDIAPQQN.

The helical; Signal-anchor for type II membrane protein transmembrane segment at S22–K41 threads the bilayer. In terms of domain architecture, Thioredoxin spans Y47–P189. The cysteines at positions 89 and 92 are disulfide-linked.

This sequence belongs to the thioredoxin family. ResA subfamily.

It is found in the cell membrane. It functions in the pathway protein modification; cytochrome c assembly. In terms of biological role, thiol-disulfide oxidoreductase which is required in disulfide reduction during c-type cytochrome synthesis. May accept reducing equivalents from CcdA, leading to breakage of disulfide bonds in apocytochrome c; following this reduction heme can be covalently attached. In Oceanobacillus iheyensis (strain DSM 14371 / CIP 107618 / JCM 11309 / KCTC 3954 / HTE831), this protein is Thiol-disulfide oxidoreductase ResA.